A 741-amino-acid chain; its full sequence is Nuclear pore complex protein Nup88 (741 aa).

Alanine 2 carries the N-acetylalanine modification. Phosphoserine occurs at positions 35, 50, 379, 437, 442, and 517. Threonine 525 is subject to Phosphothreonine. Serine 540 is modified (phosphoserine). A coiled-coil region spans residues 585-651 (EEIQRRVKLL…KLLHSFHSEL (67 aa)). Serine 698 is modified (phosphoserine).

Interacts with NUP214/CAN. Interacts with NUP62 and NUP98. Ubiquitous.

Its subcellular location is the nucleus. The protein resides in the nuclear pore complex. Component of nuclear pore complex. The chain is Nuclear pore complex protein Nup88 (NUP88) from Homo sapiens (Human).